The chain runs to 200 residues: MMEEELLIPEDEYQKSGIHIGTQIKSKDMDPYIFKIRNDGLYILDIRKTNHALIIAGKMLARYRPEQILAVAQRQYAFRPVSKFSEVVGSKSIIGRFIPGTLTNPALPNYSEAKIILVTDPLADTQAMKEAIKVGIPIIAMCDANNKTDFVDLIIPTNNKGRRSLAVIYWLLAREILKNRGDIKSYDEFKQTIDDFEVQI.

Belongs to the universal ribosomal protein uS2 family.

The sequence is that of Small ribosomal subunit protein uS2 from Picrophilus torridus (strain ATCC 700027 / DSM 9790 / JCM 10055 / NBRC 100828 / KAW 2/3).